The following is a 196-amino-acid chain: SPRY domain-containing protein 7 (196 aa).

Alanine 2 bears the N-acetylalanine mark. In terms of domain architecture, B30.2/SPRY spans 2 to 184 (ATSVLCCLRC…FSEFYHTPPP (183 aa)).

In Homo sapiens (Human), this protein is SPRY domain-containing protein 7 (SPRYD7).